A 179-amino-acid polypeptide reads, in one-letter code: UPF0302 protein EF_1554 (179 aa).

The protein belongs to the UPF0302 family.

The chain is UPF0302 protein EF_1554 from Enterococcus faecalis (strain ATCC 700802 / V583).